A 296-amino-acid polypeptide reads, in one-letter code: Cytidine deaminase (296 aa).

2 consecutive CMP/dCMP-type deaminase domains span residues 47–167 and 186–296; these read SQDE…FGPA and ESAD…VDPV. 88–90 serves as a coordination point for substrate; that stretch reads NLE. Position 101 (His101) interacts with Zn(2+). The active-site Proton donor is the Glu103. Residues Cys128 and Cys131 each contribute to the Zn(2+) site.

The protein belongs to the cytidine and deoxycytidylate deaminase family. In terms of assembly, homodimer. Requires Zn(2+) as cofactor.

It catalyses the reaction cytidine + H2O + H(+) = uridine + NH4(+). It carries out the reaction 2'-deoxycytidine + H2O + H(+) = 2'-deoxyuridine + NH4(+). In terms of biological role, this enzyme scavenges exogenous and endogenous cytidine and 2'-deoxycytidine for UMP synthesis. The polypeptide is Cytidine deaminase (Shewanella loihica (strain ATCC BAA-1088 / PV-4)).